The primary structure comprises 304 residues: Olfactory receptor 52A4 (304 aa).

Residues 1–32 (MALPITNGTLFMPFVLTFIGIPGFESVQCWIG) are Extracellular-facing. The N-linked (GlcNAc...) asparagine glycan is linked to asparagine 7. Residues 33 to 53 (IPFCATYVIALIGNSLLLIII) traverse the membrane as a helical segment. Over 54–61 (KSEPSLHE) the chain is Cytoplasmic. Residues 62-82 (PMYIFLATLGATDISLSTSIV) traverse the membrane as a helical segment. The Extracellular segment spans residues 83–103 (PKMLDIFWFHLPEIYFDACLF). An intrachain disulfide couples cysteine 101 to cysteine 184. A helical membrane pass occupies residues 104 to 124 (QMWLIHTFQGIESGVLLAMAL). Over 125 to 146 (DRCVAICYPLRRAIVFTRQLVT) the chain is Cytoplasmic. Residues 147–167 (YIVVGVTLRPAILVIPCLLLI) traverse the membrane as a helical segment. The Extracellular portion of the chain corresponds to 168 to 203 (KCHLKLYRTKLIYHTYCERVALVKLATEDVYINKVY). A helical transmembrane segment spans residues 204–224 (GILGAFIVGGLDFIFITLSYI). The Cytoplasmic portion of the chain corresponds to 225–255 (QIFITVFHLPLKEARLKVFNTCIPHIYVFFQ). The chain crosses the membrane as a helical span at residues 256-276 (FYLLAFFFIFYSQIWILYPII). The Extracellular segment spans residues 277–279 (CTY). A helical membrane pass occupies residues 280-300 (HLVQSLPTGPTIPQPLYLWVK). Residues 301 to 304 (DQTH) lie on the Cytoplasmic side of the membrane.

It belongs to the G-protein coupled receptor 1 family.

It localises to the cell membrane. Its function is as follows. Odorant receptor. The chain is Olfactory receptor 52A4 from Homo sapiens (Human).